A 185-amino-acid polypeptide reads, in one-letter code: Ribosome-recycling factor (185 aa).

Belongs to the RRF family.

The protein localises to the cytoplasm. Responsible for the release of ribosomes from messenger RNA at the termination of protein biosynthesis. May increase the efficiency of translation by recycling ribosomes from one round of translation to another. The protein is Ribosome-recycling factor of Trichlorobacter lovleyi (strain ATCC BAA-1151 / DSM 17278 / SZ) (Geobacter lovleyi).